Reading from the N-terminus, the 486-residue chain is Glutamyl-tRNA(Gln) amidotransferase subunit A (486 aa).

Residues Lys79 and Ser154 each act as charge relay system in the active site. The active-site Acyl-ester intermediate is Ser178.

The protein belongs to the amidase family. GatA subfamily. As to quaternary structure, heterotrimer of A, B and C subunits.

The enzyme catalyses L-glutamyl-tRNA(Gln) + L-glutamine + ATP + H2O = L-glutaminyl-tRNA(Gln) + L-glutamate + ADP + phosphate + H(+). In terms of biological role, allows the formation of correctly charged Gln-tRNA(Gln) through the transamidation of misacylated Glu-tRNA(Gln) in organisms which lack glutaminyl-tRNA synthetase. The reaction takes place in the presence of glutamine and ATP through an activated gamma-phospho-Glu-tRNA(Gln). The protein is Glutamyl-tRNA(Gln) amidotransferase subunit A of Dehalococcoides mccartyi (strain ATCC BAA-2100 / JCM 16839 / KCTC 5957 / BAV1).